The chain runs to 175 residues: Avenin-like a7 (175 aa).

A signal peptide spans 1–19 (MKTMFILALLAFTATSAVA).

It belongs to the prolamin family. In terms of processing, contains 7 disulfide bonds.

Functionally, seed storage protein. Not integrated in the gluten polymer through disulfide bonds, unless incorporated by reduction and reoxidation during dough making. Increases dough strength and bread volume, but decreases dough stability when added into a base wheat flour. In Triticum aestivum (Wheat), this protein is Avenin-like a7.